The chain runs to 385 residues: Exopolygalacturonase rpg16 (385 aa).

Positions 1 to 26 (MVRFTSFTSPFSAILLLSFGINKVAT) are cleaved as a signal peptide. Asn-143, Asn-161, Asn-164, and Asn-180 each carry an N-linked (GlcNAc...) asparagine glycan. One copy of the PbH1 1 repeat lies at 165-195 (STNLLLHDFIIHTVSNNSNPAKNTDALDLYH). Residue Asp-210 is the Proton donor of the active site. An intrachain disulfide couples Cys-212 to Cys-229. N-linked (GlcNAc...) asparagine glycosylation is found at Asn-218 and Asn-226. PbH1 repeat units lie at residues 219–241 (VTKV…GSLG), 249–270 (VTQV…RVKT), and 278–299 (VEDI…IITT). His-233 is an active-site residue. 3 N-linked (GlcNAc...) asparagine glycosylation sites follow: Asn-256, Asn-282, and Asn-343. Cysteines 344 and 350 form a disulfide. A PbH1 5 repeat occupies 350–376 (CSDVTLTNINISKASNNTKNVCVNLKG). N-linked (GlcNAc...) asparagine glycans are attached at residues Asn-359 and Asn-365.

It belongs to the glycosyl hydrolase 28 family. Post-translationally, N-glycosylated.

It is found in the secreted. It catalyses the reaction [(1-&gt;4)-alpha-D-galacturonosyl](n) + H2O = alpha-D-galacturonate + [(1-&gt;4)-alpha-D-galacturonosyl](n-1). Functionally, specific in hydrolyzing the terminal glycosidic bond of polygalacturonic acid and oligogalacturonates. The polypeptide is Exopolygalacturonase rpg16 (Rhizopus delemar (strain RA 99-880 / ATCC MYA-4621 / FGSC 9543 / NRRL 43880) (Mucormycosis agent)).